A 310-amino-acid polypeptide reads, in one-letter code: HPr kinase/phosphorylase (310 aa).

Active-site residues include His138 and Lys159. Gly153–Ser160 serves as a coordination point for ATP. Residue Ser160 participates in Mg(2+) binding. Asp177 acts as the Proton acceptor; for phosphorylation activity. Proton donor; for dephosphorylation activity in catalysis. Residues Leu201–Asp210 are important for the catalytic mechanism of both phosphorylation and dephosphorylation. Residue Glu202 coordinates Mg(2+). Residue Arg243 is part of the active site. Residues Pro264 to Arg269 form an important for the catalytic mechanism of dephosphorylation region.

Belongs to the HPrK/P family. As to quaternary structure, homohexamer. Mg(2+) is required as a cofactor.

It carries out the reaction [HPr protein]-L-serine + ATP = [HPr protein]-O-phospho-L-serine + ADP + H(+). The catalysed reaction is [HPr protein]-O-phospho-L-serine + phosphate + H(+) = [HPr protein]-L-serine + diphosphate. Functionally, catalyzes the ATP- as well as the pyrophosphate-dependent phosphorylation of a specific serine residue in HPr, a phosphocarrier protein of the phosphoenolpyruvate-dependent sugar phosphotransferase system (PTS). HprK/P also catalyzes the pyrophosphate-producing, inorganic phosphate-dependent dephosphorylation (phosphorolysis) of seryl-phosphorylated HPr (P-Ser-HPr). The two antagonistic activities of HprK/P are regulated by several intracellular metabolites, which change their concentration in response to the absence or presence of rapidly metabolisable carbon sources (glucose, fructose, etc.) in the growth medium. Therefore, by controlling the phosphorylation state of HPr, HPrK/P is a sensor enzyme that plays a major role in the regulation of carbon metabolism and sugar transport: it mediates carbon catabolite repression (CCR), and regulates PTS-catalyzed carbohydrate uptake and inducer exclusion. In Streptococcus uberis (strain ATCC BAA-854 / 0140J), this protein is HPr kinase/phosphorylase.